The following is a 375-amino-acid chain: Putative F-box/kelch-repeat protein At3g24610 (375 aa).

The segment at 1-27 (MSNEAPEVEPHSKRRKKEASPSSSSGF) is disordered. The F-box domain occupies 25–71 (SGFLQSLPEAVAMICLARVSRLDHAALSLVSKSCRSMVLSPELYQTR). The Kelch repeat unit spans residues 138–183 (KINVWGGCKYKHYYDWGEVFDPKTQTWADMSIPKPVREEKIYVVDS).

This Arabidopsis thaliana (Mouse-ear cress) protein is Putative F-box/kelch-repeat protein At3g24610.